The primary structure comprises 608 residues: Phosphogluconate dehydratase (608 aa).

[4Fe-4S] cluster-binding residues include C154 and C221.

The protein belongs to the IlvD/Edd family. Requires [4Fe-4S] cluster as cofactor.

The enzyme catalyses 6-phospho-D-gluconate = 2-dehydro-3-deoxy-6-phospho-D-gluconate + H2O. Its pathway is carbohydrate metabolism; Entner-Doudoroff pathway. In terms of biological role, catalyzes the dehydration of 6-phospho-D-gluconate to 2-dehydro-3-deoxy-6-phospho-D-gluconate. The chain is Phosphogluconate dehydratase from Helicobacter pylori (strain ATCC 700392 / 26695) (Campylobacter pylori).